Reading from the N-terminus, the 488-residue chain is Ribulose bisphosphate carboxylase large chain (488 aa).

Substrate is bound by residues asparagine 127 and threonine 177. The Proton acceptor role is filled by lysine 179. Lysine 181 serves as a coordination point for substrate. Mg(2+)-binding residues include lysine 205, aspartate 207, and glutamate 208. Lysine 205 is subject to N6-carboxylysine. The active-site Proton acceptor is the histidine 297. The substrate site is built by arginine 298, histidine 330, and serine 382.

The protein belongs to the RuBisCO large chain family. Type I subfamily. Heterohexadecamer of 8 large chains and 8 small chains. Mg(2+) serves as cofactor.

The protein localises to the plastid. Its subcellular location is the chloroplast. The catalysed reaction is 2 (2R)-3-phosphoglycerate + 2 H(+) = D-ribulose 1,5-bisphosphate + CO2 + H2O. The enzyme catalyses D-ribulose 1,5-bisphosphate + O2 = 2-phosphoglycolate + (2R)-3-phosphoglycerate + 2 H(+). Its function is as follows. RuBisCO catalyzes two reactions: the carboxylation of D-ribulose 1,5-bisphosphate, the primary event in carbon dioxide fixation, as well as the oxidative fragmentation of the pentose substrate in the photorespiration process. Both reactions occur simultaneously and in competition at the same active site. This is Ribulose bisphosphate carboxylase large chain from Cyanidium caldarium (Red alga).